We begin with the raw amino-acid sequence, 511 residues long: 2,3-bisphosphoglycerate-independent phosphoglycerate mutase (511 aa).

Asp12 serves as a coordination point for Mn(2+). Phosphotyrosine is present on Tyr36. Ser62 serves as a coordination point for Mn(2+). Ser62 (phosphoserine intermediate) is an active-site residue. Substrate-binding positions include His123, 153-154 (RD), Arg185, Arg191, 261-264 (RPDR), and Lys336. Mn(2+) contacts are provided by Asp403, His407, Asp444, His445, and His462.

The protein belongs to the BPG-independent phosphoglycerate mutase family. As to quaternary structure, monomer. Requires Mn(2+) as cofactor.

The catalysed reaction is (2R)-2-phosphoglycerate = (2R)-3-phosphoglycerate. Its pathway is carbohydrate degradation; glycolysis; pyruvate from D-glyceraldehyde 3-phosphate: step 3/5. With respect to regulation, could be inhibited during sporulation by acidification of the forespore, thus allowing accumulation of the spore's large depot of 3-phosphoglyceric acid. Essential for rapid growth and for sporulation. Catalyzes the interconversion of 2-phosphoglycerate (2-PGA) and 3-phosphoglycerate (3-PGA). In Geobacillus stearothermophilus (Bacillus stearothermophilus), this protein is 2,3-bisphosphoglycerate-independent phosphoglycerate mutase.